The primary structure comprises 287 residues: Phosphoribosylaminoimidazole-succinocarboxamide synthase (287 aa).

It belongs to the SAICAR synthetase family.

The enzyme catalyses 5-amino-1-(5-phospho-D-ribosyl)imidazole-4-carboxylate + L-aspartate + ATP = (2S)-2-[5-amino-1-(5-phospho-beta-D-ribosyl)imidazole-4-carboxamido]succinate + ADP + phosphate + 2 H(+). It functions in the pathway purine metabolism; IMP biosynthesis via de novo pathway; 5-amino-1-(5-phospho-D-ribosyl)imidazole-4-carboxamide from 5-amino-1-(5-phospho-D-ribosyl)imidazole-4-carboxylate: step 1/2. This chain is Phosphoribosylaminoimidazole-succinocarboxamide synthase, found in Neisseria meningitidis serogroup B (strain ATCC BAA-335 / MC58).